The primary structure comprises 350 residues: Protein memo-1 homolog (350 aa).

The protein belongs to the MEMO1 family. In terms of assembly, interacts with rho-1. Expressed in neuronal and non-neuronal cells in the head and tail, pharyngeal cells, spermatheca, distal tip cells, anchor cell and the intestine.

Its function is as follows. Plays a role in the oxidative stress response and the maintenance of longevity by regulating the interaction between GTPase rho-1 and oxidase bli-3. In turn, this serves to modulate bli-3 activity and the control of reactive oxygen species production. May control cell migration by relaying extracellular chemotactic signals to the microtubule cytoskeleton. The sequence is that of Protein memo-1 homolog from Caenorhabditis elegans.